We begin with the raw amino-acid sequence, 313 residues long: Protein PHOSPHATE-INDUCED 1 (313 aa).

Positions 1–22 are cleaved as a signal peptide; the sequence is MATSHFILKLFLVISFCNVCFA. The N-linked (GlcNAc...) asparagine glycan is linked to N119.

It belongs to the EXORDIUM family.

It is found in the secreted. The protein resides in the extracellular space. Its subcellular location is the apoplast. May be involved in the regulation of cell division. This Nicotiana tabacum (Common tobacco) protein is Protein PHOSPHATE-INDUCED 1.